A 227-amino-acid chain; its full sequence is Large ribosomal subunit protein uL1 (227 aa).

It belongs to the universal ribosomal protein uL1 family. As to quaternary structure, part of the 50S ribosomal subunit.

Binds directly to 23S rRNA. The L1 stalk is quite mobile in the ribosome, and is involved in E site tRNA release. Functionally, protein L1 is also a translational repressor protein, it controls the translation of the L11 operon by binding to its mRNA. The sequence is that of Large ribosomal subunit protein uL1 from Tropheryma whipplei (strain TW08/27) (Whipple's bacillus).